We begin with the raw amino-acid sequence, 155 residues long: SsrA-binding protein (155 aa).

This sequence belongs to the SmpB family.

The protein resides in the cytoplasm. Required for rescue of stalled ribosomes mediated by trans-translation. Binds to transfer-messenger RNA (tmRNA), required for stable association of tmRNA with ribosomes. tmRNA and SmpB together mimic tRNA shape, replacing the anticodon stem-loop with SmpB. tmRNA is encoded by the ssrA gene; the 2 termini fold to resemble tRNA(Ala) and it encodes a 'tag peptide', a short internal open reading frame. During trans-translation Ala-aminoacylated tmRNA acts like a tRNA, entering the A-site of stalled ribosomes, displacing the stalled mRNA. The ribosome then switches to translate the ORF on the tmRNA; the nascent peptide is terminated with the 'tag peptide' encoded by the tmRNA and targeted for degradation. The ribosome is freed to recommence translation, which seems to be the essential function of trans-translation. This Streptococcus pyogenes serotype M5 (strain Manfredo) protein is SsrA-binding protein.